The chain runs to 199 residues: MRNPPALEQLVEALRCLPGVGPKSALRMAYYLLQRDRKGAGILAKSLDQALQVVSHCNLCNNFSEQEICPLCASPARDRTLLCIVEMPSDLMMLEQTQTYQGMYFVLMGRLSPLDGIGPRDIHLDKLLKRAQDGKVEEVILATNYTVEGEATAHYVSELLRARGIQVSRIARGLPMGGEIEHVDSGTLAQALLERRHVR.

The C4-type zinc-finger motif lies at 57-72 (CNLCNNFSEQEICPLC). The region spanning 80–175 (TLLCIVEMPS…QVSRIARGLP (96 aa)) is the Toprim domain.

It belongs to the RecR family.

Its function is as follows. May play a role in DNA repair. It seems to be involved in an RecBC-independent recombinational process of DNA repair. It may act with RecF and RecO. This chain is Recombination protein RecR, found in Methylobacillus flagellatus (strain ATCC 51484 / DSM 6875 / VKM B-1610 / KT).